Consider the following 575-residue polypeptide: Regulatory protein zeste (575 aa).

Over residues 1–26 the composition is skewed to gly residues; it reads MSAQGEGGGAGGSGGGGAGSDGGGNA. Disordered regions lie at residues 1–53 and 151–174; these read MSAQ…LPLT and SVAS…VKVE. The tract at residues 2–47 is hydrophobic; that stretch reads SAQGEGGGAGGSGGGGAGSDGGGNAGQSSTGSGTVAVTNGGNSSAK. Positions 31–51 are enriched in polar residues; that stretch reads TGSGTVAVTNGGNSSAKNQLP. The DNA-binding element occupies 48 to 128; that stretch reads NQLPLTPRFT…WLNSRLRKQY (81 aa). The segment covering 151-164 has biased composition (low complexity); it reads SVASAVPQQQQQQH.

In terms of assembly, self-associates forming complexes of several hundred monomers.

It localises to the nucleus. Involved in transvection phenomena (= synapsis-dependent gene expression), where the synaptic pairing of chromosomes carrying genes with which zeste interacts influences the expression of these genes. Zeste binds to DNA and stimulates transcription from a nearby promoter. This is Regulatory protein zeste (z) from Drosophila melanogaster (Fruit fly).